We begin with the raw amino-acid sequence, 349 residues long: Decapping nuclease RAI1 (349 aa).

Residue glutamate 157 coordinates a divalent metal cation. Substrate is bound at residue glutamate 205. 3 residues coordinate a divalent metal cation: aspartate 207, glutamate 222, and leucine 223. Residues lysine 224 and glutamine 248 each contribute to the substrate site.

Belongs to the DXO/Dom3Z family. In terms of assembly, interacts with RAT1; the interaction is direct, stabilizes RAT1 protein structure and stimulates its exoribonuclease activity. The interaction also stimulates RAI1 pyrophosphohydrolase activity, probably by recruiting it to mRNA substrates. A divalent metal cation serves as cofactor.

The protein localises to the nucleus. It carries out the reaction a 5'-end NAD(+)-phospho-ribonucleoside in mRNA + H2O = a 5'-end phospho-ribonucleoside in mRNA + NAD(+) + H(+). It catalyses the reaction a 5'-end (N(7)-methyl 5'-triphosphoguanosine)-ribonucleoside-ribonucleotide in mRNA + H2O = a (N(7)-methyl 5'-triphosphoguanosine)-nucleoside + a 5'-end phospho-ribonucleoside in mRNA + H(+). The catalysed reaction is a 5'-end triphospho-ribonucleoside in mRNA + H2O = a 5'-end phospho-ribonucleoside in mRNA + diphosphate + H(+). Functionally, decapping enzyme for NAD-capped RNAs: specifically hydrolyzes the nicotinamide adenine dinucleotide (NAD) cap from a subset of RNAs by removing the entire NAD moiety from the 5'-end of an NAD-capped RNA. The NAD-cap is present at the 5'-end of some RNAs and snoRNAs. In contrast to the canonical 5'-end N7 methylguanosine (m7G) cap, the NAD cap promotes mRNA decay. Also acts as a non-canonical decapping enzyme that removes the entire cap structure of m7G capped or incompletely capped RNAs. Has decapping activity toward incomplete 5'-end m7G cap mRNAs such as unmethylated 5'-end-capped RNA (cap0), while it has no activity toward 2'-O-ribose methylated m7G cap (cap1). Also possesses RNA 5'-pyrophosphohydrolase activity by hydrolyzing the 5'-end triphosphate to release pyrophosphates. Stimulates exoribonuclease activity of Rat1, allowing it to degrade RNAs with stable secondary structure more effectively. This Yarrowia lipolytica (strain CLIB 122 / E 150) (Yeast) protein is Decapping nuclease RAI1 (RAI1).